A 51-amino-acid chain; its full sequence is Structural protein ORF5a (51 aa).

A helical membrane pass occupies residues Arg11–Phe28.

This sequence belongs to the arteriviridae ORF5a protein family. In terms of assembly, interacts with GP2b and GP4.

It is found in the virion. The protein resides in the host cell membrane. Minor virion component that plays an essential role in virus infectivity. This Porcine reproductive and respiratory syndrome virus (strain VR-2332) (PRRSV) protein is Structural protein ORF5a.